The primary structure comprises 319 residues: Ribosomal RNA small subunit methyltransferase H (319 aa).

S-adenosyl-L-methionine is bound by residues 35 to 37 (AGH), Asp-55, Phe-84, Asp-104, and Gln-111.

It belongs to the methyltransferase superfamily. RsmH family.

Its subcellular location is the cytoplasm. The enzyme catalyses cytidine(1402) in 16S rRNA + S-adenosyl-L-methionine = N(4)-methylcytidine(1402) in 16S rRNA + S-adenosyl-L-homocysteine + H(+). Specifically methylates the N4 position of cytidine in position 1402 (C1402) of 16S rRNA. This is Ribosomal RNA small subunit methyltransferase H from Enterococcus hirae.